Here is a 396-residue protein sequence, read N- to C-terminus: S-adenosylmethionine synthase 4 (396 aa).

Glu-13 lines the Mg(2+) pocket. ATP is bound at residue His-19. Residue Glu-47 participates in K(+) binding. L-methionine is bound by residues Glu-60 and Gln-103. Residues 171–173 (DGK), 239–242 (SGRF), Asp-250, 256–257 (RK), Ala-273, Lys-277, and Lys-281 contribute to the ATP site. Residue Asp-250 participates in L-methionine binding. Lys-281 serves as a coordination point for L-methionine.

It belongs to the AdoMet synthase family. Homotetramer. Requires Mn(2+) as cofactor. Mg(2+) is required as a cofactor. It depends on Co(2+) as a cofactor. The cofactor is K(+). As to expression, expressed in roots, stems and leaves (at protein level).

It localises to the cytoplasm. The catalysed reaction is L-methionine + ATP + H2O = S-adenosyl-L-methionine + phosphate + diphosphate. It functions in the pathway amino-acid biosynthesis; S-adenosyl-L-methionine biosynthesis; S-adenosyl-L-methionine from L-methionine: step 1/1. Functionally, catalyzes the formation of S-adenosylmethionine from methionine and ATP. The reaction comprises two steps that are both catalyzed by the same enzyme: formation of S-adenosylmethionine (AdoMet) and triphosphate, and subsequent hydrolysis of the triphosphate. May be involved in the synthesis of betain in response to abiotic stress such as high salinity. The chain is S-adenosylmethionine synthase 4 (SAMS4) from Atriplex nummularia (Old man saltbush).